The following is an 83-amino-acid chain: MVKQIQSSDKENYDLLLLLPNVYAMTLLIITNTLLIILSYSVLLNNDVLLTLTTIRNIPISIAPTMAIESTIVSSTSLITTSP.

Residues A24 to L44 form a helical membrane-spanning segment.

The protein resides in the host membrane. This is an uncharacterized protein from Acidianus sp. F28 (AFV-2).